Here is a 207-residue protein sequence, read N- to C-terminus: Uridine kinase (207 aa).

13–20 (GASGSGKT) contacts ATP.

Belongs to the uridine kinase family.

The protein localises to the cytoplasm. It carries out the reaction uridine + ATP = UMP + ADP + H(+). The catalysed reaction is cytidine + ATP = CMP + ADP + H(+). Its pathway is pyrimidine metabolism; CTP biosynthesis via salvage pathway; CTP from cytidine: step 1/3. It participates in pyrimidine metabolism; UMP biosynthesis via salvage pathway; UMP from uridine: step 1/1. The chain is Uridine kinase from Ureaplasma urealyticum serovar 10 (strain ATCC 33699 / Western).